A 486-amino-acid chain; its full sequence is Surface lipoprotein assembly modifier (486 aa).

An N-terminal signal peptide occupies residues 1–29; that stretch reads MKNGVKQISFLSLIGLSLIGLSLTNIAWA. Residues 30–197 form an N-terminal domain region; sequence KVARPKNDTL…QYLLTLNQRN (168 aa). Positions 198–486 are C-terminal probable beta barrel; that stretch reads QWIWQVGLNF…RIYLEIGKIF (289 aa). The next 14 membrane-spanning stretches (beta stranded) occupy residues 199–209, 237–248, 253–262, 276–286, 290–300, 320–330, 334–344, 358–367, 373–382, 395–404, 409–419, 437–446, 453–463, and 476–486; these read WIWQVGLNFLN, GRVFFISRKKWP, FFSKTMFNGN, TLRIGGGLGYQ, VEVSLFPFQEK, LGIRLENVDWL, WQISTALEYGE, YFISSTLFYL, FWFVGMDFHR, KTLRLGWGQD, ISSRLTFSYAN, YATTITLWHR, LTPKLSWDYQK, and NRIYLEIGKIF.

It belongs to the Slam family.

The protein resides in the cell outer membrane. Required for correct export to the cell surface of some cell outer membrane lipoproteins (tested with TpbP) upon heterologous expression in E.coli and probably also in Haemophilus. The protein is Surface lipoprotein assembly modifier of Haemophilus influenzae (strain 86-028NP).